The primary structure comprises 229 residues: Large ribosomal subunit protein uL4 (229 aa).

The segment at 62 to 103 is disordered; that stretch reads SRRQGTHQVKNRAAVSGSGKKPWKQKGTGRARHSSRRSPIWV. Over residues 82–97 the composition is skewed to basic residues; that stretch reads KPWKQKGTGRARHSSR.

The protein belongs to the universal ribosomal protein uL4 family. Part of the 50S ribosomal subunit.

Its function is as follows. One of the primary rRNA binding proteins, this protein initially binds near the 5'-end of the 23S rRNA. It is important during the early stages of 50S assembly. It makes multiple contacts with different domains of the 23S rRNA in the assembled 50S subunit and ribosome. Functionally, forms part of the polypeptide exit tunnel. This is Large ribosomal subunit protein uL4 from Mycoplasmopsis synoviae (strain 53) (Mycoplasma synoviae).